Reading from the N-terminus, the 379-residue chain is S-adenosylmethionine synthase (379 aa).

Histidine 15 is an ATP binding site. Position 17 (aspartate 17) interacts with Mg(2+). Residue glutamate 43 participates in K(+) binding. The L-methionine site is built by glutamate 56 and glutamine 99. The flexible loop stretch occupies residues 99–109; that stretch reads QSPDITQGVDR. ATP-binding positions include 164 to 166, 230 to 231, aspartate 239, 245 to 246, alanine 262, and lysine 266; these read DAK, RF, and RK. Aspartate 239 is a binding site for L-methionine. Lysine 270 provides a ligand contact to L-methionine.

This sequence belongs to the AdoMet synthase family. Homotetramer; dimer of dimers. It depends on Mg(2+) as a cofactor. Requires K(+) as cofactor.

Its subcellular location is the cytoplasm. The catalysed reaction is L-methionine + ATP + H2O = S-adenosyl-L-methionine + phosphate + diphosphate. The protein operates within amino-acid biosynthesis; S-adenosyl-L-methionine biosynthesis; S-adenosyl-L-methionine from L-methionine: step 1/1. In terms of biological role, catalyzes the formation of S-adenosylmethionine (AdoMet) from methionine and ATP. The overall synthetic reaction is composed of two sequential steps, AdoMet formation and the subsequent tripolyphosphate hydrolysis which occurs prior to release of AdoMet from the enzyme. This chain is S-adenosylmethionine synthase, found in Buchnera aphidicola subsp. Schizaphis graminum (strain Sg).